A 1207-amino-acid polypeptide reads, in one-letter code: DNA-directed RNA polymerase subunit beta' (1207 aa).

The Zn(2+) site is built by Cys60, Cys62, Cys75, and Cys78. Mg(2+)-binding residues include Asp449, Asp451, and Asp453. Zn(2+) contacts are provided by Cys822, Cys896, Cys903, and Cys906.

The protein belongs to the RNA polymerase beta' chain family. The RNAP catalytic core consists of 2 alpha, 1 beta, 1 beta' and 1 omega subunit. When a sigma factor is associated with the core the holoenzyme is formed, which can initiate transcription. The cofactor is Mg(2+). Requires Zn(2+) as cofactor.

It catalyses the reaction RNA(n) + a ribonucleoside 5'-triphosphate = RNA(n+1) + diphosphate. DNA-dependent RNA polymerase catalyzes the transcription of DNA into RNA using the four ribonucleoside triphosphates as substrates. The chain is DNA-directed RNA polymerase subunit beta' from Staphylococcus epidermidis (strain ATCC 35984 / DSM 28319 / BCRC 17069 / CCUG 31568 / BM 3577 / RP62A).